Reading from the N-terminus, the 332-residue chain is uncharacterized protein (332 aa).

Positions 1-26 are cleaved as a signal peptide; it reads MSSLGKLLKLTLLGILLSFSCKFVFG.

It is found in the endoplasmic reticulum. This is an uncharacterized protein from Schizosaccharomyces pombe (strain 972 / ATCC 24843) (Fission yeast).